The following is a 1181-amino-acid chain: Integrin alpha-2 (1181 aa).

A signal peptide spans 1–29 (MGPERTGAAPLPLLLVLALSQGILNCCLA). At 30 to 1132 (YNVGLPEAKI…KPDEKAEVPT (1103 aa)) the chain is on the extracellular side. FG-GAP repeat units lie at residues 34-92 (LPEA…TATC) and 101-161 (TSIP…LSAS). A disulfide bridge connects residues C83 and C92. N-linked (GlcNAc...) asparagine glycosylation is found at N105, N112, and N343. In terms of domain architecture, VWFA spans 188-365 (WDAVKNFLEK…TLGEQIFSIE (178 aa)). FG-GAP repeat units lie at residues 366-420 (GTVQ…LIFP), 423-475 (AFDQ…ENGN), 477-539 (TVIQ…ILGQ), 540-598 (HQFL…TIRT), and 602-664 (QKIL…FTPE). N-linked (GlcNAc...) asparagine glycosylation is found at N432, N460, and N475. Positions 499, 501, 503, 507, 563, 565, 567, 571, 627, 629, 631, and 635 each coordinate Ca(2+). 5 disulfide bridges follow: C680–C737, C789–C795, C865–C876, C1019–C1050, and C1055–C1060. An N-linked (GlcNAc...) asparagine glycan is attached at N699. 3 N-linked (GlcNAc...) asparagine glycosylation sites follow: N1057, N1074, and N1081. The chain crosses the membrane as a helical span at residues 1133 to 1154 (GVIIGSIIAGILLLLALVAILW). The segment at 1155 to 1161 (KLGFFKR) is interaction with HPS5. At 1155–1181 (KLGFFKRKYEKMTKNPDEIDETTELSS) the chain is on the cytoplasmic side. A GFFKR motif motif is present at residues 1157–1161 (GFFKR).

Belongs to the integrin alpha chain family. As to quaternary structure, heterodimer of an alpha and a beta subunit. Alpha-2 associates with beta-1. Interacts with HPS5 and RAB21. (Microbial infection) Integrin ITGA2:ITGB1 interacts (via ITAG2 I-domain) with rotavirus A VP4 protein. In terms of assembly, (Microbial infection) Integrin ITGA2:ITGB1 interacts with human echoviruses 1 and 8 capsid proteins.

It localises to the membrane. Its function is as follows. Integrin alpha-2/beta-1 is a receptor for laminin, collagen, collagen C-propeptides, fibronectin and E-cadherin. It recognizes the proline-hydroxylated sequence G-F-P-G-E-R in collagen. It is responsible for adhesion of platelets and other cells to collagens, modulation of collagen and collagenase gene expression, force generation and organization of newly synthesized extracellular matrix. (Microbial infection) Integrin ITGA2:ITGB1 acts as a receptor for Human rotavirus A. Functionally, (Microbial infection) Integrin ITGA2:ITGB1 acts as a receptor for Human echoviruses 1 and 8. In Homo sapiens (Human), this protein is Integrin alpha-2 (ITGA2).